The chain runs to 905 residues: Coatomer subunit beta' (905 aa).

WD repeat units lie at residues 13–52, 55–94, 97–136, 140–180, 183–224, 227–266, 350–388, and 390–425; these read AMSDRVKSVDLHPTEPWMLASLYNGSVCVWNHETQTLVKT, VCDLPVRAAKFVARKNWVVTGADDMQIRVFNYNTLERVHM, AHSDYIRCIAVHPTQPFILTSSDDMLIKLWDWDKKWSCSQ, GHTH…PNFT, GHEK…CVQT, GHAQNVSCATFHPELPIIITGSEDGTVRIWHSSTYRLEST, SCEIYPQTIQHNPNGRFVVVCGDGEYIIYTAMALRNKSF, and SAQEFAWAHDSSEYAIRESNSVVKIFKNFKEKKSFK. An N6-acetyllysine modification is found at Lys627. The stretch at 746 to 783 is one WD 9 repeat; it reads IRTGRLPEAAFLARTYLPSQVSRVVKLWRENLSKVNQK. The segment at 837–905 is disordered; that stretch reads EEAKRFQPSR…INLDEDILDD (69 aa). Ser859 is modified (phosphoserine). A coiled-coil region spans residues 867-891; that stretch reads QTTHKEEKSFQELEDDLDTMELEDI. A compositionally biased stretch (acidic residues) spans 878-905; sequence ELEDDLDTMELEDIDTTDINLDEDILDD.

This sequence belongs to the WD repeat COPB2 family. In terms of assembly, oligomeric complex that consists of at least the alpha, beta, beta', gamma, delta, epsilon and zeta subunits. Probably interacts with PEX11A. Interacts with JAGN1. Interacts with SCYL1.

Its subcellular location is the cytoplasm. It localises to the cytosol. The protein resides in the golgi apparatus membrane. It is found in the cytoplasmic vesicle. The protein localises to the COPI-coated vesicle membrane. Functionally, the coatomer is a cytosolic protein complex that binds to dilysine motifs and reversibly associates with Golgi non-clathrin-coated vesicles, which further mediate biosynthetic protein transport from the ER, via the Golgi up to the trans Golgi network. Coatomer complex is required for budding from Golgi membranes, and is essential for the retrograde Golgi-to-ER transport of dilysine-tagged proteins. In mammals, the coatomer can only be recruited by membranes associated to ADP-ribosylation factors (ARFs), which are small GTP-binding proteins; the complex also influences the Golgi structural integrity, as well as the processing, activity, and endocytic recycling of LDL receptors. Its function is as follows. This coatomer complex protein, essential for Golgi budding and vesicular trafficking, is a selective binding protein (RACK) for protein kinase C, epsilon type. It binds to Golgi membranes in a GTP-dependent manner. The polypeptide is Coatomer subunit beta' (Copb2) (Rattus norvegicus (Rat)).